A 417-amino-acid chain; its full sequence is MIETLGVLLAGGAGERLYPLTRDRAKPAVNFGGIYRIIDITLSNCINSGLRRVYILTQYKALSLNRHIREGWSGIVGNELGEFIEILPPMKRVSENWYMGTADAVYQNIYSIGSEQPRYVLILSGDHIYKMNYDLMMRQHKDSGADVTLATILIDPSETRHFGVVDVDNQSHVNGFVEKPKSTELRSPYDPSKVSASMGIYIFNTDVLIPVLLKDAEDPNSKHDFGHNILPKMVGEYKIYSFNFIDENKKEALYWRDVGTLDAYYDANLDLVSVAPVFNLYDKAWPIRTHQRQYPPAKFVFAEQGRMGTALDSVVSMGCIVSGGTVRNCVLSPDVRVNSFSEVDSSILFSHVNVGRHCRIRRSIIDRDVHIPEGTVIGYDTESDRQKYHVTDSGITVVTRDYSLFENPVEVDYFTSE.

Alpha-D-glucose 1-phosphate-binding positions include Tyr-98, Gly-163, 178–179, and Ser-197; that span reads EK.

The protein belongs to the bacterial/plant glucose-1-phosphate adenylyltransferase family. As to quaternary structure, homotetramer.

It catalyses the reaction alpha-D-glucose 1-phosphate + ATP + H(+) = ADP-alpha-D-glucose + diphosphate. The protein operates within glycan biosynthesis; glycogen biosynthesis. Functionally, involved in the biosynthesis of ADP-glucose, a building block required for the elongation reactions to produce glycogen. Catalyzes the reaction between ATP and alpha-D-glucose 1-phosphate (G1P) to produce pyrophosphate and ADP-Glc. The polypeptide is Glucose-1-phosphate adenylyltransferase (Koribacter versatilis (strain Ellin345)).